We begin with the raw amino-acid sequence, 367 residues long: tRNA-specific 2-thiouridylase MnmA (367 aa).

ATP contacts are provided by residues 12-19 (GMSGGVDS) and methionine 38. Residues 98 to 100 (NPD) form an interaction with target base in tRNA region. Cysteine 103 serves as the catalytic Nucleophile. A disulfide bridge connects residues cysteine 103 and cysteine 200. Glycine 128 lines the ATP pocket. The segment at 150–152 (KDQ) is interaction with tRNA. The Cysteine persulfide intermediate role is filled by cysteine 200. Residues 312-313 (RY) form an interaction with tRNA region.

Belongs to the MnmA/TRMU family. As to quaternary structure, interacts with TusE.

It localises to the cytoplasm. The enzyme catalyses S-sulfanyl-L-cysteinyl-[protein] + uridine(34) in tRNA + AH2 + ATP = 2-thiouridine(34) in tRNA + L-cysteinyl-[protein] + A + AMP + diphosphate + H(+). Its function is as follows. Catalyzes the 2-thiolation of uridine at the wobble position (U34) of tRNA(Lys), tRNA(Glu) and tRNA(Gln), leading to the formation of s(2)U34, the first step of tRNA-mnm(5)s(2)U34 synthesis. Sulfur is provided by IscS, via a sulfur-relay system. Binds ATP and its substrate tRNAs. This Blochmanniella pennsylvanica (strain BPEN) protein is tRNA-specific 2-thiouridylase MnmA.